The following is a 194-amino-acid chain: Orotate phosphoribosyltransferase (194 aa).

117-125 (EDVVTTGLS) contributes to the 5-phospho-alpha-D-ribose 1-diphosphate binding site. Orotate is bound by residues T121 and R149.

It belongs to the purine/pyrimidine phosphoribosyltransferase family. PyrE subfamily. Homodimer. Mg(2+) is required as a cofactor.

The catalysed reaction is orotidine 5'-phosphate + diphosphate = orotate + 5-phospho-alpha-D-ribose 1-diphosphate. The protein operates within pyrimidine metabolism; UMP biosynthesis via de novo pathway; UMP from orotate: step 1/2. In terms of biological role, catalyzes the transfer of a ribosyl phosphate group from 5-phosphoribose 1-diphosphate to orotate, leading to the formation of orotidine monophosphate (OMP). The protein is Orotate phosphoribosyltransferase of Novosphingobium aromaticivorans (strain ATCC 700278 / DSM 12444 / CCUG 56034 / CIP 105152 / NBRC 16084 / F199).